The following is a 422-amino-acid chain: Probable FBD-associated F-box protein At1g32375 (422 aa).

Residues 1–53 form the F-box domain; sequence MDKLSQLPEALLVRILSLLSAKDVVSTMVLSKRWQFLWMLVPKLIYDDSYQAI. Residues 342–392 form the FBD domain; it reads CWNEPSAVPECLLTSLETLEWVKYEGTEEEKEVAAFILRSGSCLKKVTISS.

In Arabidopsis thaliana (Mouse-ear cress), this protein is Probable FBD-associated F-box protein At1g32375.